The chain runs to 233 residues: Demethylmenaquinone methyltransferase (233 aa).

Residues Thr-60, Asp-81, and 106–107 each bind S-adenosyl-L-methionine; that span reads DA.

This sequence belongs to the class I-like SAM-binding methyltransferase superfamily. MenG/UbiE family.

It carries out the reaction a 2-demethylmenaquinol + S-adenosyl-L-methionine = a menaquinol + S-adenosyl-L-homocysteine + H(+). It functions in the pathway quinol/quinone metabolism; menaquinone biosynthesis; menaquinol from 1,4-dihydroxy-2-naphthoate: step 2/2. Its function is as follows. Methyltransferase required for the conversion of demethylmenaquinol (DMKH2) to menaquinol (MKH2). The protein is Demethylmenaquinone methyltransferase of Staphylococcus saprophyticus subsp. saprophyticus (strain ATCC 15305 / DSM 20229 / NCIMB 8711 / NCTC 7292 / S-41).